Consider the following 154-residue polypeptide: Protein phosphatase 1 regulatory subunit 27 (154 aa).

ANK repeat units lie at residues 63-92 (SGLA…DIHQ) and 96-125 (TGWT…DRDA).

Interacts with DYSF and PPP1CA.

Functionally, inhibits phosphatase activity of protein phosphatase 1 (PP1) complexes. The polypeptide is Protein phosphatase 1 regulatory subunit 27 (Ppp1r27) (Mus musculus (Mouse)).